The following is a 310-amino-acid chain: MTDIRITGIPKEAGFGDYVALLKPRVMSLVVFTALVGLLVAPVTVHPMIALTGILFIALGAGASGALNMWWDEDIDRVMKRTRNRPVPSGIVAPGEALGIGLALSGIAVVMLGLATNLFAAGLLAFTIFFYAVVYSMWLKRTTPQNIVIGGAAGAFPPMIGWAVATGGVSVESLFMFALIFMWTPPHFWSLALFMKSDYSDAGVPMLTVTHGRRVTRAHVLVYSLLLAPLAVAGAFTGIGGPLYLATALALNGWLLVGAVRIWRRDEAQAEADRYRVEKGFFRFSLYYLFLHFGAILAEAALKPYGLGGW.

Transmembrane regions (helical) follow at residues 21-43 (LLKP…VAPV), 48-70 (MIAL…LNMW), 95-115 (GEAL…LGLA), 118-138 (LFAA…YSMW), 147-167 (IVIG…VATG), 174-194 (LFMF…LALF), 220-240 (VLVY…TGIG), 243-263 (LYLA…VRIW), and 289-309 (LFLH…GLGG).

This sequence belongs to the UbiA prenyltransferase family. Protoheme IX farnesyltransferase subfamily. As to quaternary structure, interacts with CtaA.

The protein localises to the cell inner membrane. It catalyses the reaction heme b + (2E,6E)-farnesyl diphosphate + H2O = Fe(II)-heme o + diphosphate. Its pathway is porphyrin-containing compound metabolism; heme O biosynthesis; heme O from protoheme: step 1/1. Functionally, converts heme B (protoheme IX) to heme O by substitution of the vinyl group on carbon 2 of heme B porphyrin ring with a hydroxyethyl farnesyl side group. This chain is Protoheme IX farnesyltransferase, found in Cereibacter sphaeroides (strain KD131 / KCTC 12085) (Rhodobacter sphaeroides).